Reading from the N-terminus, the 339-residue chain is Ribonucleoside-diphosphate reductase subunit beta (339 aa).

Fe cation contacts are provided by aspartate 87 and histidine 121. Tyrosine 125 is a catalytic residue. Histidine 215 serves as a coordination point for Fe cation.

The protein belongs to the ribonucleoside diphosphate reductase small chain family. Tetramer of two alpha and two beta subunits. Requires Fe cation as cofactor.

The enzyme catalyses a 2'-deoxyribonucleoside 5'-diphosphate + [thioredoxin]-disulfide + H2O = a ribonucleoside 5'-diphosphate + [thioredoxin]-dithiol. Functionally, provides the precursors necessary for DNA synthesis. Catalyzes the biosynthesis of deoxyribonucleotides from the corresponding ribonucleotides. The protein is Ribonucleoside-diphosphate reductase subunit beta (nrdF) of Mycoplasma pneumoniae (strain ATCC 29342 / M129 / Subtype 1) (Mycoplasmoides pneumoniae).